A 49-amino-acid chain; its full sequence is Large ribosomal subunit protein bL33 (49 aa).

Belongs to the bacterial ribosomal protein bL33 family.

In Carboxydothermus hydrogenoformans (strain ATCC BAA-161 / DSM 6008 / Z-2901), this protein is Large ribosomal subunit protein bL33.